Consider the following 144-residue polypeptide: Large ribosomal subunit protein uL16 (144 aa).

Residues 1-16 (MLTPKRVKHRKQHRGK) show a composition bias toward basic residues. Residues 1-22 (MLTPKRVKHRKQHRGKMAGNAK) are disordered.

It belongs to the universal ribosomal protein uL16 family. Part of the 50S ribosomal subunit.

Binds 23S rRNA and is also seen to make contacts with the A and possibly P site tRNAs. In Brevibacillus brevis (strain 47 / JCM 6285 / NBRC 100599), this protein is Large ribosomal subunit protein uL16.